The sequence spans 421 residues: Adenosylhomocysteinase (421 aa).

Positions 128 and 153 each coordinate substrate. An NAD(+)-binding site is contributed by 154 to 156 (TTT). Positions 183 and 187 each coordinate substrate. NAD(+) is bound by residues asparagine 188, 217-222 (GYGWCG), glutamate 240, 296-298 (AGH), and asparagine 343.

This sequence belongs to the adenosylhomocysteinase family. The cofactor is NAD(+).

The protein resides in the cytoplasm. It catalyses the reaction S-adenosyl-L-homocysteine + H2O = L-homocysteine + adenosine. Its pathway is amino-acid biosynthesis; L-homocysteine biosynthesis; L-homocysteine from S-adenosyl-L-homocysteine: step 1/1. May play a key role in the regulation of the intracellular concentration of adenosylhomocysteine. This chain is Adenosylhomocysteinase, found in Thermococcus kodakarensis (strain ATCC BAA-918 / JCM 12380 / KOD1) (Pyrococcus kodakaraensis (strain KOD1)).